The primary structure comprises 151 residues: uncharacterized protein (151 aa).

The disordered stretch occupies residues 48–151 (RPPGWQPPVN…SKFDHTRKKF (104 aa)). Over residues 55–77 (PVNTGPTSPVSINASNAAPSNLK) the composition is skewed to polar residues. Composition is skewed to low complexity over residues 85–105 (PRRL…RLPS) and 123–141 (KSPS…SLLR).

This is an uncharacterized protein from Schizosaccharomyces pombe (strain 972 / ATCC 24843) (Fission yeast).